Here is a 384-residue protein sequence, read N- to C-terminus: S-adenosylmethionine synthase (384 aa).

Residue His15 participates in ATP binding. Asp17 serves as a coordination point for Mg(2+). Residue Glu43 coordinates K(+). Residues Glu56 and Gln99 each contribute to the L-methionine site. The tract at residues 99–109 (QSPDINQGVDR) is flexible loop. ATP contacts are provided by residues 164–166 (DAK), 230–231 (RF), Asp239, 245–246 (RK), Ala262, and Lys266. Asp239 contacts L-methionine. Position 270 (Lys270) interacts with L-methionine.

The protein belongs to the AdoMet synthase family. Homotetramer; dimer of dimers. It depends on Mg(2+) as a cofactor. K(+) is required as a cofactor.

It is found in the cytoplasm. The catalysed reaction is L-methionine + ATP + H2O = S-adenosyl-L-methionine + phosphate + diphosphate. It participates in amino-acid biosynthesis; S-adenosyl-L-methionine biosynthesis; S-adenosyl-L-methionine from L-methionine: step 1/1. Functionally, catalyzes the formation of S-adenosylmethionine (AdoMet) from methionine and ATP. The overall synthetic reaction is composed of two sequential steps, AdoMet formation and the subsequent tripolyphosphate hydrolysis which occurs prior to release of AdoMet from the enzyme. The chain is S-adenosylmethionine synthase from Enterobacter sp. (strain 638).